The primary structure comprises 187 residues: Dirigent protein 23 (187 aa).

An N-terminal signal peptide occupies residues 1–24 (MAKEEYVSRMLVMLIMIMPLVAQG). An N-linked (GlcNAc...) asparagine glycan is attached at N182.

This sequence belongs to the plant dirigent protein family. In terms of assembly, homodimer.

It localises to the secreted. The protein localises to the extracellular space. Its subcellular location is the apoplast. Its function is as follows. Dirigent proteins impart stereoselectivity on the phenoxy radical-coupling reaction, yielding optically active lignans from two molecules of coniferyl alcohol in the biosynthesis of lignans, flavonolignans, and alkaloids and thus plays a central role in plant secondary metabolism. The protein is Dirigent protein 23 (DIR23) of Arabidopsis thaliana (Mouse-ear cress).